The primary structure comprises 156 residues: Type IV major fimbrial protein FimA (156 aa).

Residues 1–7 (MKSLQKG) constitute a propeptide, leader sequence. F8 carries the post-translational modification N-methylphenylalanine. Residues 8 to 28 (FTLIELMIVVAIIGILAAIAI) traverse the membrane as a helical segment. Disulfide bonds link C57-C67 and C140-C153.

It belongs to the N-Me-Phe pilin family. As to quaternary structure, the pili are polar flexible filaments of about 5.4 nanometers diameter and 2.5 micrometers average length; they consist of only a single polypeptide chain arranged in a helical configuration of five subunits per turn in the assembled pilus.

Its subcellular location is the fimbrium. The protein resides in the membrane. In terms of biological role, major component of the type IV fimbriae that plays an essential role in twitching motility, natural transformation, and protease secretion. The chain is Type IV major fimbrial protein FimA (fimA) from Dichelobacter nodosus (Bacteroides nodosus).